The following is a 96-amino-acid chain: Protein RnfH (96 aa).

The protein belongs to the UPF0125 (RnfH) family.

This is Protein RnfH from Escherichia coli O81 (strain ED1a).